We begin with the raw amino-acid sequence, 357 residues long: Thiamine thiazole synthase, chloroplastic (357 aa).

Substrate is bound by residues Ala-102, 123–124 (EQ), Gly-131, and Val-196. 2,3-didehydroalanine (Cys) is present on Cys-233. Substrate-binding positions include Asp-235, His-250, Met-304, and 314-316 (RMG).

The protein belongs to the THI4 family. In terms of assembly, homooctamer. Requires Fe cation as cofactor. In terms of processing, during the catalytic reaction, a sulfide is transferred from Cys-233 to a reaction intermediate, generating a dehydroalanine residue.

The protein resides in the plastid. The protein localises to the chloroplast. The catalysed reaction is [ADP-thiazole synthase]-L-cysteine + glycine + NAD(+) = [ADP-thiazole synthase]-dehydroalanine + ADP-5-ethyl-4-methylthiazole-2-carboxylate + nicotinamide + 3 H2O + 2 H(+). In terms of biological role, involved in biosynthesis of the thiamine precursor thiazole. Catalyzes the conversion of NAD and glycine to adenosine diphosphate 5-(2-hydroxyethyl)-4-methylthiazole-2-carboxylic acid (ADT), an adenylated thiazole intermediate. The reaction includes an iron-dependent sulfide transfer from a conserved cysteine residue of the protein to a thiazole intermediate. The enzyme can only undergo a single turnover, which suggests it is a suicide enzyme. May have additional roles in adaptation to various stress conditions and in DNA damage tolerance. The polypeptide is Thiamine thiazole synthase, chloroplastic (Chlamydomonas reinhardtii (Chlamydomonas smithii)).